The sequence spans 698 residues: Elongation factor G 1 (698 aa).

Residues 8-290 (ERYRNIGICA…AVVEFLPAPV (283 aa)) enclose the tr-type G domain. GTP contacts are provided by residues 17-24 (AHVDAGKT), 88-92 (DTPGH), and 142-145 (NKMD).

This sequence belongs to the TRAFAC class translation factor GTPase superfamily. Classic translation factor GTPase family. EF-G/EF-2 subfamily.

The protein resides in the cytoplasm. Functionally, catalyzes the GTP-dependent ribosomal translocation step during translation elongation. During this step, the ribosome changes from the pre-translocational (PRE) to the post-translocational (POST) state as the newly formed A-site-bound peptidyl-tRNA and P-site-bound deacylated tRNA move to the P and E sites, respectively. Catalyzes the coordinated movement of the two tRNA molecules, the mRNA and conformational changes in the ribosome. The protein is Elongation factor G 1 of Shewanella oneidensis (strain ATCC 700550 / JCM 31522 / CIP 106686 / LMG 19005 / NCIMB 14063 / MR-1).